Reading from the N-terminus, the 557-residue chain is Dihydroxy-acid dehydratase (557 aa).

Asp78 is a Mg(2+) binding site. Residue Cys119 coordinates [2Fe-2S] cluster. Residues Asp120 and Lys121 each contribute to the Mg(2+) site. Lys121 carries the N6-carboxylysine modification. Cys192 lines the [2Fe-2S] cluster pocket. Mg(2+) is bound at residue Glu443. Ser469 functions as the Proton acceptor in the catalytic mechanism.

It belongs to the IlvD/Edd family. As to quaternary structure, homodimer. The cofactor is [2Fe-2S] cluster. Mg(2+) is required as a cofactor.

The enzyme catalyses (2R)-2,3-dihydroxy-3-methylbutanoate = 3-methyl-2-oxobutanoate + H2O. The catalysed reaction is (2R,3R)-2,3-dihydroxy-3-methylpentanoate = (S)-3-methyl-2-oxopentanoate + H2O. Its pathway is amino-acid biosynthesis; L-isoleucine biosynthesis; L-isoleucine from 2-oxobutanoate: step 3/4. The protein operates within amino-acid biosynthesis; L-valine biosynthesis; L-valine from pyruvate: step 3/4. In terms of biological role, functions in the biosynthesis of branched-chain amino acids. Catalyzes the dehydration of (2R,3R)-2,3-dihydroxy-3-methylpentanoate (2,3-dihydroxy-3-methylvalerate) into 2-oxo-3-methylpentanoate (2-oxo-3-methylvalerate) and of (2R)-2,3-dihydroxy-3-methylbutanoate (2,3-dihydroxyisovalerate) into 2-oxo-3-methylbutanoate (2-oxoisovalerate), the penultimate precursor to L-isoleucine and L-valine, respectively. The chain is Dihydroxy-acid dehydratase from Persephonella marina (strain DSM 14350 / EX-H1).